Consider the following 446-residue polypeptide: 3-phosphoshikimate 1-carboxyvinyltransferase (446 aa).

Residues lysine 21, serine 22, and arginine 26 each contribute to the 3-phosphoshikimate site. Residue lysine 21 participates in phosphoenolpyruvate binding. Glycine 92 and arginine 120 together coordinate phosphoenolpyruvate. The 3-phosphoshikimate site is built by serine 165, glutamine 166, aspartate 308, and lysine 335. Glutamine 166 is a phosphoenolpyruvate binding site. The Proton acceptor role is filled by aspartate 308. Residues arginine 339, arginine 380, and lysine 406 each coordinate phosphoenolpyruvate.

It belongs to the EPSP synthase family. In terms of assembly, monomer.

It localises to the cytoplasm. The catalysed reaction is 3-phosphoshikimate + phosphoenolpyruvate = 5-O-(1-carboxyvinyl)-3-phosphoshikimate + phosphate. It participates in metabolic intermediate biosynthesis; chorismate biosynthesis; chorismate from D-erythrose 4-phosphate and phosphoenolpyruvate: step 6/7. Its function is as follows. Catalyzes the transfer of the enolpyruvyl moiety of phosphoenolpyruvate (PEP) to the 5-hydroxyl of shikimate-3-phosphate (S3P) to produce enolpyruvyl shikimate-3-phosphate and inorganic phosphate. The polypeptide is 3-phosphoshikimate 1-carboxyvinyltransferase (Chlamydia caviae (strain ATCC VR-813 / DSM 19441 / 03DC25 / GPIC) (Chlamydophila caviae)).